Reading from the N-terminus, the 416-residue chain is Putative serine protease HhoB (416 aa).

The first 25 residues, 1–25 (MAIHLKASHLGVAVLLLLFGGAIGA), serve as a signal peptide directing secretion. Residues 35-53 (GQNHSSPDSPVNTSPQSLT) are compositionally biased toward polar residues. The tract at residues 35 to 57 (GQNHSSPDSPVNTSPQSLTPAPV) is disordered. The PDZ domain maps to 320–398 (EMTKQLRTSG…PLAIAVKRGQ (79 aa)).

This sequence belongs to the peptidase S1C family.

Functionally, a putative protease, its function overlaps that of the related putative proteases HtrA and HhoA. This chain is Putative serine protease HhoB (hhoB), found in Synechocystis sp. (strain ATCC 27184 / PCC 6803 / Kazusa).